The chain runs to 404 residues: UBP1-associated protein 2C (404 aa).

The tract at residues 1 to 29 (MDMMKKRKLDENGNGLNTNGGGTIGPTRL) is disordered. 2 RRM domains span residues 75–152 (RKLF…LAAS) and 167–248 (RKIY…GKKG). 2 disordered regions span residues 246-270 (KKGG…HGEG) and 344-404 (GSGQ…PPNY).

Expressed in root apical and lateral meristems, young leaves and embryos.

The protein resides in the nucleus. Functionally, heterogeneous nuclear ribonucleoprotein (hnRNP)-like protein that acts as a component of a complex regulating the turnover of mRNAs in the nucleus. Binds with high affinity to RNA molecules that contain U-rich sequences in 3'-UTRs. May function in complex with UBP1 and contribute to the stabilization of mRNAs in the nucleus. In Arabidopsis thaliana (Mouse-ear cress), this protein is UBP1-associated protein 2C (UBA2C).